The chain runs to 131 residues: MKKTGVMNSNISRVIADMGHMDWLGVGDAGTPVPAETEKIDLSVRPGLPSFIDVLEEVLKELEVQKIYIAEEIKTENPKQLEAIKKTLPNVEIEFIPHSELKKDLKTSKAFIRTGEETPYSNVILESGVTF.

His20 acts as the Proton donor in catalysis. Substrate is bound by residues Asp28, His98, and 120-122; that span reads YSN.

Belongs to the RbsD / FucU family. RbsD subfamily. As to quaternary structure, homodecamer.

Its subcellular location is the cytoplasm. The catalysed reaction is beta-D-ribopyranose = beta-D-ribofuranose. It functions in the pathway carbohydrate metabolism; D-ribose degradation; D-ribose 5-phosphate from beta-D-ribopyranose: step 1/2. Its function is as follows. Catalyzes the interconversion of beta-pyran and beta-furan forms of D-ribose. The polypeptide is D-ribose pyranase (Lactobacillus gasseri (strain ATCC 33323 / DSM 20243 / BCRC 14619 / CIP 102991 / JCM 1131 / KCTC 3163 / NCIMB 11718 / NCTC 13722 / AM63)).